A 333-amino-acid chain; its full sequence is Leucine carboxyl methyltransferase 1 (333 aa).

S-adenosyl-L-methionine is bound by residues Lys-42, Arg-82, Gly-107, Asp-131, 181-182 (DL), and Glu-208.

This sequence belongs to the methyltransferase superfamily. LCMT family.

It catalyses the reaction [phosphatase 2A protein]-C-terminal L-leucine + S-adenosyl-L-methionine = [phosphatase 2A protein]-C-terminal L-leucine methyl ester + S-adenosyl-L-homocysteine. Methylates the carboxyl group of the C-terminal leucine residue of protein phosphatase 2A catalytic subunits to form alpha-leucine ester residues. This is Leucine carboxyl methyltransferase 1 from Caenorhabditis elegans.